A 256-amino-acid polypeptide reads, in one-letter code: Thiazole synthase (256 aa).

The Schiff-base intermediate with DXP role is filled by lysine 95. 1-deoxy-D-xylulose 5-phosphate is bound by residues glycine 156, 182 to 183 (AG), and 204 to 205 (NT).

The protein belongs to the ThiG family. As to quaternary structure, homotetramer. Forms heterodimers with either ThiH or ThiS.

The protein localises to the cytoplasm. The catalysed reaction is [ThiS sulfur-carrier protein]-C-terminal-Gly-aminoethanethioate + 2-iminoacetate + 1-deoxy-D-xylulose 5-phosphate = [ThiS sulfur-carrier protein]-C-terminal Gly-Gly + 2-[(2R,5Z)-2-carboxy-4-methylthiazol-5(2H)-ylidene]ethyl phosphate + 2 H2O + H(+). Its pathway is cofactor biosynthesis; thiamine diphosphate biosynthesis. In terms of biological role, catalyzes the rearrangement of 1-deoxy-D-xylulose 5-phosphate (DXP) to produce the thiazole phosphate moiety of thiamine. Sulfur is provided by the thiocarboxylate moiety of the carrier protein ThiS. In vitro, sulfur can be provided by H(2)S. In Salmonella typhi, this protein is Thiazole synthase.